A 364-amino-acid chain; its full sequence is Envelope glycoprotein US27 (364 aa).

Residues 1-36 (MTTSTTTTTNIMLQVSNVTNHTLNSTEIYQLFEYTR) are Virion surface-facing. N-linked (GlcNAc...) asparagine; by host glycosylation is found at Asn-17, Asn-20, and Asn-24. A helical transmembrane segment spans residues 37 to 57 (FGVWLMCIVGTFLNMLVITTI). The Intravirion segment spans residues 58–69 (LYYRRKKKSPSD). A helical membrane pass occupies residues 70–90 (TYICNLAVADLLIVVGLPFFL). At 91-103 (EYAKHHPKLSREV) the chain is on the virion surface side. A helical membrane pass occupies residues 104-124 (VCSGLNACFYICLFAGVCFLI). Residues 125–150 (NLSMDRYCVIVWGVELNRVRNNKRAT) lie on the Intravirion side of the membrane. Residues 151–171 (CWVVIFWILAALMGMPHYLMY) traverse the membrane as a helical segment. Residues 172–188 (SHTNNECVGEFANETSG) are Virion surface-facing. Residues 189–209 (WFPVFLNTKVNICGYLAPIVL) form a helical membrane-spanning segment. Topologically, residues 210–234 (MAYTYNRMVRFIINYVGKWHMQTLH) are intravirion. A helical membrane pass occupies residues 235–255 (VLLVVVVSFASFWFPFNLALF). Over 256-279 (LESIRLLSGTQNETLQTVITFCLY) the chain is Virion surface. The helical transmembrane segment at 280 to 300 (VGQFLAYVRACLNPGIYILVG) threads the bilayer. Over 301-364 (TQMRKDMWTT…MESGEEEFLL (64 aa)) the chain is Intravirion. Positions 344 to 364 (KRTHYDRKHAPMESGEEEFLL) are disordered.

It belongs to the G-protein coupled receptor 1 family. In terms of assembly, heterodimerizes with US28.

The protein resides in the virion. Its subcellular location is the host cell membrane. In terms of biological role, plays an important role in spread of HCMV via the extracellular route. As a G-protein-coupled receptor (vGPCR), may activate signaling pathways important for virion assembly or egress processes. In Homo sapiens (Human), this protein is Envelope glycoprotein US27 (US27).